Consider the following 662-residue polypeptide: DNA ligase (662 aa).

NAD(+) contacts are provided by residues 34-38 (DYDYD), 83-84 (SI), and Glu-113. Lys-115 functions as the N6-AMP-lysine intermediate in the catalytic mechanism. Positions 136, 172, 286, and 310 each coordinate NAD(+). Cys-404, Cys-407, Cys-422, and Cys-427 together coordinate Zn(2+). A BRCT domain is found at 583 to 662 (RASASCQGKT…SDLLKILYPN (80 aa)).

The protein belongs to the NAD-dependent DNA ligase family. LigA subfamily. It depends on Mg(2+) as a cofactor. The cofactor is Mn(2+).

The catalysed reaction is NAD(+) + (deoxyribonucleotide)n-3'-hydroxyl + 5'-phospho-(deoxyribonucleotide)m = (deoxyribonucleotide)n+m + AMP + beta-nicotinamide D-nucleotide.. DNA ligase that catalyzes the formation of phosphodiester linkages between 5'-phosphoryl and 3'-hydroxyl groups in double-stranded DNA using NAD as a coenzyme and as the energy source for the reaction. It is essential for DNA replication and repair of damaged DNA. This chain is DNA ligase, found in Chlamydia felis (strain Fe/C-56) (Chlamydophila felis).